Here is a 276-residue protein sequence, read N- to C-terminus: Putative translation initiation factor eIF-2B subunit 2-like (276 aa).

It belongs to the eIF-2B alpha/beta/delta subunits family. As to quaternary structure, complex of two different subunits.

In terms of biological role, catalyzes the exchange of initiation factor 2-bound GDP for GTP. This Pyrococcus abyssi (strain GE5 / Orsay) protein is Putative translation initiation factor eIF-2B subunit 2-like.